The following is a 255-amino-acid chain: Aliphatic sulfonates import ATP-binding protein SsuB (255 aa).

One can recognise an ABC transporter domain in the interval leucine 12 to leucine 233. Glycine 44–serine 51 is a binding site for ATP.

Belongs to the ABC transporter superfamily. Aliphatic sulfonates importer (TC 3.A.1.17.2) family. As to quaternary structure, the complex is composed of two ATP-binding proteins (SsuB), two transmembrane proteins (SsuC) and a solute-binding protein (SsuA).

The protein resides in the cell inner membrane. It carries out the reaction ATP + H2O + aliphatic sulfonate-[sulfonate-binding protein]Side 1 = ADP + phosphate + aliphatic sulfonateSide 2 + [sulfonate-binding protein]Side 1.. Functionally, part of the ABC transporter complex SsuABC involved in aliphatic sulfonates import. Responsible for energy coupling to the transport system. In Escherichia coli (strain K12), this protein is Aliphatic sulfonates import ATP-binding protein SsuB.